A 385-amino-acid chain; its full sequence is ATP synthase subunit a-1 (385 aa).

A propeptide spanning residues 1-133 (MRRIFLFDEN…ALNIVGQAAA (133 aa)) is cleaved from the precursor. Transmembrane regions (helical) follow at residues 154–174 (FSFT…LLLI), 220–240 (FFPC…QGMI), 249–269 (HFLI…IVGF), 276–296 (FFSF…LVLL), 316–336 (MMAG…MLCM), 339–359 (IFYF…TGLE), and 362–382 (VAIL…NDAI).

Belongs to the ATPase A chain family. In terms of assembly, F-type ATPases have 2 components, CF(1) - the catalytic core - and CF(0) - the membrane proton channel. CF(1) has five subunits: alpha(3), beta(3), gamma(1), delta(1), epsilon(1). CF(0) has three main subunits: a, b and c.

The protein resides in the mitochondrion inner membrane. In terms of biological role, mitochondrial membrane ATP synthase (F(1)F(0) ATP synthase or Complex V) produces ATP from ADP in the presence of a proton gradient across the membrane which is generated by electron transport complexes of the respiratory chain. F-type ATPases consist of two structural domains, F(1) - containing the extramembraneous catalytic core and F(0) - containing the membrane proton channel, linked together by a central stalk and a peripheral stalk. During catalysis, ATP synthesis in the catalytic domain of F(1) is coupled via a rotary mechanism of the central stalk subunits to proton translocation. Key component of the proton channel; it may play a direct role in the translocation of protons across the membrane. This chain is ATP synthase subunit a-1 (ATP6-1), found in Arabidopsis thaliana (Mouse-ear cress).